Here is a 274-residue protein sequence, read N- to C-terminus: CDC48-associated ubiquitin-like/zinc finger protein 1 (274 aa).

Residues 12–58 (LDVGKHCAYCRQLDFLPFHCSFCNEDFCSNHRLKEDHHCRWLLEHEE) form an AN1-type zinc finger. Positions 18, 21, 31, 34, 39, 42, 48, and 50 each coordinate Zn(2+). Residues 170–266 (NRIYIWCYLV…KDLDTLYLVH (97 aa)) are ubiquitin-like. Ser273 carries the post-translational modification Phosphoserine.

In terms of assembly, interacts (via its ubiquitin-like domain) with CDC48 (via N-terminus). Associates with the 26S proteasome. Specifically interacts with the regulatory particle (RP) subunit RPN2. Exposure to arsenite, a known inducer of protein misfolding resulting in accumulation of polyubiquitinated conjugates, enhances the association with the proteoasome. Binds to ubiquitinated proteins conjugated to a 4 or more molecule ubiquitin chain. Binding to ubiquitinated proteins is zinc-dependent.

Its subcellular location is the cytoplasm. The protein localises to the nucleus. In terms of biological role, promotes efficient arsenite-induced clearance of stress granules (SGs). May have a role in the ubiquitin-proteasome system (UPS) protecting cells from metalloid-induced proteotoxicity. The polypeptide is CDC48-associated ubiquitin-like/zinc finger protein 1 (Saccharomyces cerevisiae (strain ATCC 204508 / S288c) (Baker's yeast)).